A 456-amino-acid chain; its full sequence is MGQTLFDKVWKKHVLHGKEGEPQLLYIDLHLIHEVTSPQAFEGLRIQNRKLRRPDLTFATLDHNVPTIDIFNIKDEIANKQITTLQQNAKDFGVHIFDMGSDEQGIVHMVGPETGLTQPGKTIVCGDSHTATHGAFGAIAFGIGTSEVEHVFATQTLWQTKPKNLKININGSLPAGVYAKDIILYLINQYGVDFGTGYALEFTGETIKNLSMEARMTICNMAIEAGAKYGLMQPDETTFNYVKGRPYATDFDSSMAWWKELYSDDDAYFDKVIELDVTNLEPQVTWGTNPEMGVSFSNPFPEIKNANDQRAYDYMGLHPGQKAEDIKLGYVFLGSCTNARLSDLIEASHIIKGQQVHPNITAIVVPGSRTVKKEAEALGLDKLFKDAGFEWREPGCSMCLGMNPDQVPEGVHCASTSNRNFEGRQGKGARTHLVSPAMAAAAAINGKFIDVRKVVV.

3 residues coordinate [4Fe-4S] cluster: Cys-336, Cys-396, and Cys-399.

This sequence belongs to the aconitase/IPM isomerase family. LeuC type 1 subfamily. In terms of assembly, heterodimer of LeuC and LeuD. [4Fe-4S] cluster serves as cofactor.

The enzyme catalyses (2R,3S)-3-isopropylmalate = (2S)-2-isopropylmalate. The protein operates within amino-acid biosynthesis; L-leucine biosynthesis; L-leucine from 3-methyl-2-oxobutanoate: step 2/4. In terms of biological role, catalyzes the isomerization between 2-isopropylmalate and 3-isopropylmalate, via the formation of 2-isopropylmaleate. The sequence is that of 3-isopropylmalate dehydratase large subunit from Staphylococcus epidermidis (strain ATCC 35984 / DSM 28319 / BCRC 17069 / CCUG 31568 / BM 3577 / RP62A).